Consider the following 365-residue polypeptide: 3-methyl-L-tyrosine peroxygenase (365 aa).

Residue 313–317 (HIGVC) participates in heme binding.

The cofactor is heme.

The catalysed reaction is 3-methyl-L-tyrosine + H2O2 = 5-hydroxy-3-methyl-L-tyrosine + H2O. Its pathway is antibiotic biosynthesis. In terms of biological role, heme-containing peroxygenase that mediates the hydroxylation of 3-methyl-L-tyrosine (3-Me-Tyr) into 3-hydroxy-5-methyl-L-tyrosine (3-OH-5-Me-Tyr) in biosynthesis of saframycin A, a potent antitumor antibiotic that belongs to the tetrahydroisoquinoline family. Involved in biosynthesis of 3-hydroxy-5-methyl-O-methyltyrosine (3-OH-5-Me-OMe-Tyr), a core structure of saframycin A. This is 3-methyl-L-tyrosine peroxygenase from Streptomyces lavendulae.